A 228-amino-acid chain; its full sequence is L-ribulose-5-phosphate 4-epimerase UlaF (228 aa).

Substrate contacts are provided by residues 26–27 (GN), 43–44 (SG), and 72–73 (SS). Aspartate 74, histidine 93, and histidine 95 together coordinate Zn(2+). Aspartate 118 acts as the Proton donor/acceptor in catalysis. Position 167 (histidine 167) interacts with Zn(2+). The active-site Proton donor/acceptor is the tyrosine 225.

This sequence belongs to the aldolase class II family. AraD/FucA subfamily. It depends on Zn(2+) as a cofactor.

It catalyses the reaction L-ribulose 5-phosphate = D-xylulose 5-phosphate. It functions in the pathway cofactor degradation; L-ascorbate degradation; D-xylulose 5-phosphate from L-ascorbate: step 4/4. Functionally, catalyzes the isomerization of L-ribulose 5-phosphate to D-xylulose 5-phosphate. Is involved in the anaerobic L-ascorbate utilization. The polypeptide is L-ribulose-5-phosphate 4-epimerase UlaF (Shigella dysenteriae serotype 1 (strain Sd197)).